A 422-amino-acid chain; its full sequence is UDP-N-acetylglucosamine 1-carboxyvinyltransferase (422 aa).

22-23 (KN) is a phosphoenolpyruvate binding site. Arginine 94 contacts UDP-N-acetyl-alpha-D-glucosamine. Catalysis depends on cysteine 118, which acts as the Proton donor. Cysteine 118 carries the post-translational modification 2-(S-cysteinyl)pyruvic acid O-phosphothioketal. Residues 123–127 (RPVDL), aspartate 309, and isoleucine 331 each bind UDP-N-acetyl-alpha-D-glucosamine.

This sequence belongs to the EPSP synthase family. MurA subfamily.

The protein localises to the cytoplasm. It carries out the reaction phosphoenolpyruvate + UDP-N-acetyl-alpha-D-glucosamine = UDP-N-acetyl-3-O-(1-carboxyvinyl)-alpha-D-glucosamine + phosphate. It functions in the pathway cell wall biogenesis; peptidoglycan biosynthesis. Cell wall formation. Adds enolpyruvyl to UDP-N-acetylglucosamine. The polypeptide is UDP-N-acetylglucosamine 1-carboxyvinyltransferase (Cereibacter sphaeroides (strain ATCC 17023 / DSM 158 / JCM 6121 / CCUG 31486 / LMG 2827 / NBRC 12203 / NCIMB 8253 / ATH 2.4.1.) (Rhodobacter sphaeroides)).